The sequence spans 337 residues: Large ribosomal subunit protein uL3 (337 aa).

Residues 1–20 (MASIHRPKRGSLAFSPRKRA) form a disordered region.

The protein belongs to the universal ribosomal protein uL3 family. As to quaternary structure, part of the 50S ribosomal subunit. Forms a cluster with proteins L14 and L24e.

Functionally, one of the primary rRNA binding proteins, it binds directly near the 3'-end of the 23S rRNA, where it nucleates assembly of the 50S subunit. This is Large ribosomal subunit protein uL3 from Methanosarcina barkeri (strain Fusaro / DSM 804).